The sequence spans 244 residues: MENFTALFGAQTDPPPPPSALGFGPGKPPPPPPPPPGGGPGAAPPSTATSAPAGADKSTAGSGPFYLMRELPGSTELTGSTNLITHYNLEQAYNKFCGKKVKEKLSNFLPDLPGMIDLPGSHDNSSLRSLIEKPPILGGSFNPITGTMLSGFRLHTGPLPEQCRLMHIQPPKKKNKHKHKQSRTQDPVPPETPSDSDHKKKKKKKEEDPERKRKKKEKKKKKNRHSPDHPGMGSSQASSSSSLR.

Disordered regions lie at residues 1 to 67 (MENF…PFYL) and 171 to 244 (PKKK…SSLR). Positions 26-38 (GKPPPPPPPPPGG) are enriched in pro residues. Positions 44 to 55 (PPSTATSAPAGA) are enriched in low complexity. The span at 171–182 (PKKKNKHKHKQS) shows a compositional bias: basic residues. Residue S194 is modified to Phosphoserine. Positions 212-224 (KRKKKEKKKKKNR) are enriched in basic residues. S226 bears the Phosphoserine mark. Residues 234 to 244 (SSQASSSSSLR) show a composition bias toward low complexity.

The protein belongs to the Mediator complex subunit 19 family. Component of the Mediator complex, which is composed of MED1, MED4, MED6, MED7, MED8, MED9, MED10, MED11, MED12, MED13, MED13L, MED14, MED15, MED16, MED17, MED18, MED19, MED20, MED21, MED22, MED23, MED24, MED25, MED26, MED27, MED29, MED30, MED31, CCNC, CDK8 and CDC2L6/CDK11. The MED12, MED13, CCNC and CDK8 subunits form a distinct module termed the CDK8 module. Mediator containing the CDK8 module is less active than Mediator lacking this module in supporting transcriptional activation. Individual preparations of the Mediator complex lacking one or more distinct subunits have been variously termed ARC, CRSP, DRIP, PC2, SMCC and TRAP.

The protein localises to the nucleus. Its function is as follows. Component of the Mediator complex, a coactivator involved in the regulated transcription of nearly all RNA polymerase II-dependent genes. Mediator functions as a bridge to convey information from gene-specific regulatory proteins to the basal RNA polymerase II transcription machinery. Mediator is recruited to promoters by direct interactions with regulatory proteins and serves as a scaffold for the assembly of a functional preinitiation complex with RNA polymerase II and the general transcription factors. The polypeptide is Mediator of RNA polymerase II transcription subunit 19 (Med19) (Mus musculus (Mouse)).